A 297-amino-acid polypeptide reads, in one-letter code: Putative lipid kinase MamU (297 aa).

One can recognise a DAGKc domain in the interval 43-131 (EGKDMGRMVR…MDVGRVNDRY (89 aa)). 68–74 (GDGSLSR) is an ATP binding site. Residue Glu-274 is the Proton acceptor of the active site.

Belongs to the diacylglycerol/lipid kinase family.

It is found in the cytoplasm. Might phosphorylate lipids. This Magnetospirillum gryphiswaldense (strain DSM 6361 / JCM 21280 / NBRC 15271 / MSR-1) protein is Putative lipid kinase MamU.